A 120-amino-acid polypeptide reads, in one-letter code: Seripauperin-6 (120 aa).

An N-terminal signal peptide occupies residues 1–20; that stretch reads MVKLTSIAAGVAAIAATASA.

Belongs to the SRP1/TIP1 family. Seripauperin subfamily.

The chain is Seripauperin-6 (PAU6) from Saccharomyces cerevisiae (strain ATCC 204508 / S288c) (Baker's yeast).